A 376-amino-acid polypeptide reads, in one-letter code: GTPase Obg (376 aa).

An Obg domain is found at 1–158 (MFIDSVNLTL…RDVRLELKLI (158 aa)). The OBG-type G domain occupies 159–359 (ADVGLVGFPN…LKFSLLELLK (201 aa)). Residues 165 to 172 (GFPNVGKS), 190 to 194 (FTTLT), 212 to 215 (DIPG), 280 to 283 (TRMD), and 340 to 342 (SSA) contribute to the GTP site. Ser172 and Thr192 together coordinate Mg(2+).

It belongs to the TRAFAC class OBG-HflX-like GTPase superfamily. OBG GTPase family. In terms of assembly, monomer. The cofactor is Mg(2+).

It is found in the cytoplasm. An essential GTPase which binds GTP, GDP and possibly (p)ppGpp with moderate affinity, with high nucleotide exchange rates and a fairly low GTP hydrolysis rate. Plays a role in control of the cell cycle, stress response, ribosome biogenesis and in those bacteria that undergo differentiation, in morphogenesis control. In Campylobacter curvus (strain 525.92), this protein is GTPase Obg.